The chain runs to 444 residues: 23S rRNA (uracil(1939)-C(5))-methyltransferase RlmD (444 aa).

Residues R5–E67 enclose the TRAM domain. Residues C80, C86, C89, and C168 each coordinate [4Fe-4S] cluster. Q276, F305, N310, E326, D353, and D374 together coordinate S-adenosyl-L-methionine. The Nucleophile role is filled by C400.

This sequence belongs to the class I-like SAM-binding methyltransferase superfamily. RNA M5U methyltransferase family. RlmD subfamily.

The catalysed reaction is uridine(1939) in 23S rRNA + S-adenosyl-L-methionine = 5-methyluridine(1939) in 23S rRNA + S-adenosyl-L-homocysteine + H(+). Its function is as follows. Catalyzes the formation of 5-methyl-uridine at position 1939 (m5U1939) in 23S rRNA. This chain is 23S rRNA (uracil(1939)-C(5))-methyltransferase RlmD, found in Stenotrophomonas maltophilia (strain R551-3).